Here is a 269-residue protein sequence, read N- to C-terminus: Shikimate dehydrogenase (NADP(+)) (269 aa).

Residues 15–17 and threonine 62 contribute to the shikimate site; that span reads SLS. Lysine 66 functions as the Proton acceptor in the catalytic mechanism. The shikimate site is built by asparagine 86 and aspartate 100. NADP(+)-binding positions include 124-128, 147-152, and isoleucine 211; these read GAGGA and NRTPER. Shikimate is bound at residue tyrosine 213. NADP(+) is bound at residue glycine 234.

It belongs to the shikimate dehydrogenase family. As to quaternary structure, homodimer.

The catalysed reaction is shikimate + NADP(+) = 3-dehydroshikimate + NADPH + H(+). It participates in metabolic intermediate biosynthesis; chorismate biosynthesis; chorismate from D-erythrose 4-phosphate and phosphoenolpyruvate: step 4/7. Its function is as follows. Involved in the biosynthesis of the chorismate, which leads to the biosynthesis of aromatic amino acids. Catalyzes the reversible NADPH linked reduction of 3-dehydroshikimate (DHSA) to yield shikimate (SA). This is Shikimate dehydrogenase (NADP(+)) from Methanococcoides burtonii (strain DSM 6242 / NBRC 107633 / OCM 468 / ACE-M).